The primary structure comprises 271 residues: (+)-cis,trans-nepetalactol synthase NEPS1 (271 aa).

Residues 24–30 (GGASGIG), 49–51 (DIQ), 72–73 (DV), and N99 each bind NAD(+). 2 residues coordinate substrate: T154 and Y167. NAD(+)-binding positions include Y167, K171, and 200–205 (VLTPLA). Catalysis depends on Y167, which acts as the Proton acceptor.

The protein belongs to the short-chain dehydrogenases/reductases (SDR) family.

The enzyme catalyses (S)-8-oxocitronellyl enol = cis-trans-nepetalactol. The catalysed reaction is cis-cis-nepetalactol + NAD(+) = cis-cis-nepetalactone + NADH + H(+). It carries out the reaction cis-trans-nepetalactol + NAD(+) = cis-trans-nepetalactone + NADH + H(+). In terms of biological role, bifunctional enzyme that possesses cyclase and dehydrogenase activities. Functions as a non-oxidoreductive cyclase to promote the formation of cis-trans-nepetalactol. Functions as dehydrogenase to oxidize cis-cis-nepetalactol and cis-trans-nepetalactol into nepetalactones, metabolites that are both insect-repellent and have euphoric effect in cats. Binds NAD(+) as classical short-chain dehydrogenase/reductase (SDR), but does not utilize it for its redox-neutral cyclase activity. The sequence is that of (+)-cis,trans-nepetalactol synthase NEPS1 from Nepeta racemosa (Catmint).